Consider the following 232-residue polypeptide: Cytidylate kinase (232 aa).

11-19 serves as a coordination point for ATP; sequence GPAGAGKST.

Belongs to the cytidylate kinase family. Type 1 subfamily.

It is found in the cytoplasm. The catalysed reaction is CMP + ATP = CDP + ADP. It catalyses the reaction dCMP + ATP = dCDP + ADP. The protein is Cytidylate kinase of Roseiflexus castenholzii (strain DSM 13941 / HLO8).